A 314-amino-acid polypeptide reads, in one-letter code: Mitochondrial 2-oxoglutarate/malate carrier protein (314 aa).

An N-acetylalanine modification is found at A2. A Phosphoserine modification is found at S6. Solcar repeat units lie at residues 23–108 (VKFL…LFER), 117–208 (PGFL…SKQF), and 217–306 (DNIL…MNKA). A helical membrane pass occupies residues 24–42 (KFLFGGLAGMGATVFVQPL). K57 is modified (N6-succinyllysine). K73 carries the N6-acetyllysine modification. The chain crosses the membrane as a helical span at residues 83-101 (GLSAGLLRQATYTTTRLGI). Y102 is subject to Phosphotyrosine. Transmembrane regions (helical) follow at residues 119-140 (FLLK…GTPA), 183-202 (GCIP…LASY), and 222-240 (HFCA…SMPV). K256 carries the N6-acetyllysine modification. The chain crosses the membrane as a helical span at residues 281–300 (GFTPYYARLGPHTVLTFIFL).

Belongs to the mitochondrial carrier (TC 2.A.29) family. As to quaternary structure, interacts with SMIM26. In terms of tissue distribution, most highly expressed in the heart.

The protein resides in the mitochondrion inner membrane. It carries out the reaction (S)-malate(in) + 2-oxoglutarate(out) = (S)-malate(out) + 2-oxoglutarate(in). The catalysed reaction is malonate(in) + 2-oxoglutarate(out) = malonate(out) + 2-oxoglutarate(in). The enzyme catalyses succinate(in) + 2-oxoglutarate(out) = succinate(out) + 2-oxoglutarate(in). It catalyses the reaction maleate(in) + 2-oxoglutarate(out) = maleate(out) + 2-oxoglutarate(in). It carries out the reaction oxaloacetate(in) + 2-oxoglutarate(out) = oxaloacetate(out) + 2-oxoglutarate(in). In terms of biological role, catalyzes the transport of 2-oxoglutarate (alpha-oxoglutarate) across the inner mitochondrial membrane in an electroneutral exchange for malate. Can also exchange 2-oxoglutarate for other dicarboxylic acids such as malonate, succinate, maleate and oxaloacetate, although with lower affinity. Contributes to several metabolic processes, including the malate-aspartate shuttle, the oxoglutarate/isocitrate shuttle, in gluconeogenesis from lactate, and in nitrogen metabolism. Maintains mitochondrial fusion and fission events, and the organization and morphology of cristae. Involved in the regulation of apoptosis. Helps protect from cytotoxic-induced apoptosis by modulating glutathione levels in mitochondria. This is Mitochondrial 2-oxoglutarate/malate carrier protein (SLC25A11) from Homo sapiens (Human).